The following is a 23-amino-acid chain: Potassium channel toxin kappa-KTx 1.3 (23 aa).

2 cysteine pairs are disulfide-bonded: C4-C22 and C8-C18.

Belongs to the short scorpion toxin superfamily. Potassium channel inhibitor kappa-KTx family. Kappa-KTx 1 subfamily. Monomer. Post-translationally, is not amidated. Expressed by the venom gland.

The protein resides in the secreted. Shows very weak blocking activity on voltage-gated potassium channels Kv10.1/KCNH1/EAG1 (6.2% inhibition by 40 uM of the toxin). Has no effect on the other voltage-gated potassium channels tested. This chain is Potassium channel toxin kappa-KTx 1.3, found in Heterometrus spinifer (Asia giant forest scorpion).